The following is a 75-amino-acid chain: Large ribosomal subunit protein bL31 (75 aa).

Belongs to the bacterial ribosomal protein bL31 family. Type A subfamily. Part of the 50S ribosomal subunit.

In terms of biological role, binds the 23S rRNA. This Chlorobaculum tepidum (strain ATCC 49652 / DSM 12025 / NBRC 103806 / TLS) (Chlorobium tepidum) protein is Large ribosomal subunit protein bL31.